Reading from the N-terminus, the 450-residue chain is MGLRSHHLSLGLLLLFLLPAECLGAEGRLALKLFRDLFANYTSALRPVADTDQTLNVTLEVTLSQIIDMDERNQVLTLYLWIRQEWTDAYLRWDPNAYGGLDAIRIPSSLVWRPDIVLYNKADAQPPGSASTNVVLRHDGAVRWDAPAITRSSCRVDVAAFPFDAQHCGLTFGSWTHGGHQLDVRPRGAAASLADFVENVEWRVLGMPARRRVLTYGCCSEPYPDVTFTLLLRRRAAAYVCNLLLPCVLISLLAPLAFHLPADSGEKVSLGVTVLLALTVFQLLLAESMPPAESVPLIGKYYMATMTMVTFSTALTILIMNLHYCGPSVRPVPAWARALLLGHLARGLCVRERGEPCGQSRPPELSPSPQSPEGGAGPPAGPCHEPRCLCRQEALLHHVATIANTFRSHRAAQRCHEDWKRLARVMDRFFLAIFFSMALVMSLLVLVQAL.

An N-terminal signal peptide occupies residues 1–24 (MGLRSHHLSLGLLLLFLLPAECLG). At 25–237 (AEGRLALKLF…FTLLLRRRAA (213 aa)) the chain is on the extracellular side. Residues asparagine 40 and asparagine 56 are each glycosylated (N-linked (GlcNAc...) asparagine). Disulfide bonds link cysteine 154/cysteine 168 and cysteine 218/cysteine 219. The next 3 helical transmembrane spans lie at 238–258 (AYVC…PLAF), 268–288 (VSLG…LAES), and 302–322 (YMAT…IMNL). Residues 323 to 428 (HYCGPSVRPV…WKRLARVMDR (106 aa)) lie on the Cytoplasmic side of the membrane. Residues 355 to 380 (EPCGQSRPPELSPSPQSPEGGAGPPA) are disordered. Residues 429–449 (FFLAIFFSMALVMSLLVLVQA) form a helical membrane-spanning segment.

The protein belongs to the ligand-gated ion channel (TC 1.A.9) family. Acetylcholine receptor (TC 1.A.9.1) subfamily. Alpha-10/CHRNA10 sub-subfamily. As to quaternary structure, forms homo- or heterooligomeric channels in conjunction with CHRNA10. The native outer hair cell receptor may be composed of CHRNA9:CHRNA10 heterooligomers. Found in the stoichiometric form (CHRNA9)2:(CHRNA10)3. Expressed in inner-ear tissue, tonsil, immortalized B-cells, cultured T-cells and peripheral blood lymphocytes.

The protein resides in the synaptic cell membrane. It is found in the cell membrane. The enzyme catalyses Ca(2+)(in) = Ca(2+)(out). It catalyses the reaction K(+)(in) = K(+)(out). It carries out the reaction Na(+)(in) = Na(+)(out). The catalysed reaction is Mg(2+)(in) = Mg(2+)(out). With respect to regulation, activated by a myriad of ligands such as acetylcholine. AChR activity is inhibited by the antagonists alpha-conotoxins RgIA and GeXXA, small disulfide-constrained peptides from cone snails. Functionally, component of neuronal acetylcholine receptors (nAChRs) that function as pentameric, ligand-gated cation channels with high calcium permeability. nAChRs are excitatory neurotrasnmitter receptors formed by a collection of nAChR subunits. Each nAchR subunit confers differential attributes to channel properties, including activation, deactivation and desensitization kinetics, pH sensitivity, cation permeability, and binding to allosteric modulators. Forms heteropentamers with CHRNA9. Expressed in the inner ear, in sympathetic neurons and in other non-neuronal cells, such as skin keratinocytes and lymphocytes. nAChR formed by CHRNA9:CHRNA10 is involved in modulation of auditory stimuli. The channel is permeable to a range of divalent cations including calcium, the influx of which may activate a potassium current which hyperpolarizes the cell membrane. In the ear, mediates synaptic transmission between efferent olivocochlear fibers and hair cells of the cochlea, this may lead to a reduction in basilar membrane motion, altering the activity of auditory nerve fibers and reducing the range of dynamic hearing. This may protect against acoustic trauma. May also regulate keratinocyte adhesion. The sequence is that of Neuronal acetylcholine receptor subunit alpha-10 from Homo sapiens (Human).